A 221-amino-acid polypeptide reads, in one-letter code: Large ribosomal subunit protein uL3 (221 aa).

Residues 123 to 156 (GFAGSIKRHNQSRGPESHGSRYHRRPGSMGPIKG) are disordered.

Belongs to the universal ribosomal protein uL3 family. In terms of assembly, part of the 50S ribosomal subunit. Forms a cluster with proteins L14 and L19.

In terms of biological role, one of the primary rRNA binding proteins, it binds directly near the 3'-end of the 23S rRNA, where it nucleates assembly of the 50S subunit. The polypeptide is Large ribosomal subunit protein uL3 (Aster yellows witches'-broom phytoplasma (strain AYWB)).